A 219-amino-acid polypeptide reads, in one-letter code: Interleukin-12 subunit alpha (219 aa).

Positions 1–22 (MCPARSLLLVATLVLLDHLSLA) are cleaved as a signal peptide. Cystine bridges form between Cys-37-Cys-110, Cys-64-Cys-196, and Cys-85-Cys-123. Residues Asn-93 and Asn-107 are each glycosylated (N-linked (GlcNAc...) asparagine).

This sequence belongs to the IL-6 superfamily. As to quaternary structure, heterodimer with IL12B; disulfide-linked. This heterodimer is known as interleukin IL-12. Heterodimer with EBI3/IL27B; not disulfide-linked. This heterodimer is known as interleukin IL-35. Interacts with NBR1; this interaction promotes IL-12 secretion.

The protein resides in the secreted. Heterodimerizes with IL12B to form the IL-12 cytokine or with EBI3/IL27B to form the IL-35 cytokine. IL-12 is primarily produced by professional antigen-presenting cells (APCs) such as B-cells and dendritic cells (DCs) as well as macrophages and granulocytes and regulates T-cell and natural killer-cell responses, induces the production of interferon-gamma (IFN-gamma), favors the differentiation of T-helper 1 (Th1) cells and is an important link between innate resistance and adaptive immunity. Mechanistically, exerts its biological effects through a receptor composed of IL12R1 and IL12R2 subunits. Binding to the receptor results in the rapid tyrosine phosphorylation of a number of cellular substrates including the JAK family kinases TYK2 and JAK2. In turn, recruited STAT4 gets phosphorylated and translocates to the nucleus where it regulates cytokine/growth factor responsive genes. As part of IL-35, plays essential roles in maintaining the immune homeostasis of the liver microenvironment and also functions as an immune-suppressive cytokine. Mediates biological events through unconventional receptors composed of IL12RB2 and gp130/IL6ST heterodimers or homodimers. Signaling requires the transcription factors STAT1 and STAT4, which form a unique heterodimer that binds to distinct DNA sites. This chain is Interleukin-12 subunit alpha (IL12A), found in Homo sapiens (Human).